We begin with the raw amino-acid sequence, 327 residues long: Methionyl-tRNA formyltransferase (327 aa).

(6S)-5,6,7,8-tetrahydrofolate is bound at residue 121 to 124; that stretch reads SLLP.

This sequence belongs to the Fmt family.

The enzyme catalyses L-methionyl-tRNA(fMet) + (6R)-10-formyltetrahydrofolate = N-formyl-L-methionyl-tRNA(fMet) + (6S)-5,6,7,8-tetrahydrofolate + H(+). Functionally, attaches a formyl group to the free amino group of methionyl-tRNA(fMet). The formyl group appears to play a dual role in the initiator identity of N-formylmethionyl-tRNA by promoting its recognition by IF2 and preventing the misappropriation of this tRNA by the elongation apparatus. The polypeptide is Methionyl-tRNA formyltransferase (Burkholderia pseudomallei (strain 1710b)).